A 122-amino-acid polypeptide reads, in one-letter code: Probable dihydroneopterin aldolase (122 aa).

Residues Glu-21, Tyr-54, and 73–74 (LE) each bind substrate. The active-site Proton donor/acceptor is Lys-101.

The protein belongs to the DHNA family.

The catalysed reaction is 7,8-dihydroneopterin = 6-hydroxymethyl-7,8-dihydropterin + glycolaldehyde. Its pathway is cofactor biosynthesis; tetrahydrofolate biosynthesis; 2-amino-4-hydroxy-6-hydroxymethyl-7,8-dihydropteridine diphosphate from 7,8-dihydroneopterin triphosphate: step 3/4. Its function is as follows. Catalyzes the conversion of 7,8-dihydroneopterin to 6-hydroxymethyl-7,8-dihydropterin. This Chlamydia muridarum (strain MoPn / Nigg) protein is Probable dihydroneopterin aldolase (folB).